The primary structure comprises 103 residues: Pro-glucagon (103 aa).

The protein belongs to the glucagon family.

It is found in the secreted. Plays a key role in glucose metabolism and homeostasis. Regulates blood glucose by increasing gluconeogenesis and decreasing glycolysis. In Aquarana catesbeiana (American bullfrog), this protein is Pro-glucagon (gcg).